Reading from the N-terminus, the 205-residue chain is ATP-dependent Clp protease proteolytic subunit (205 aa).

Serine 109 functions as the Nucleophile in the catalytic mechanism. Residue histidine 134 is part of the active site.

The protein belongs to the peptidase S14 family. Fourteen ClpP subunits assemble into 2 heptameric rings which stack back to back to give a disk-like structure with a central cavity, resembling the structure of eukaryotic proteasomes.

It is found in the cytoplasm. The enzyme catalyses Hydrolysis of proteins to small peptides in the presence of ATP and magnesium. alpha-casein is the usual test substrate. In the absence of ATP, only oligopeptides shorter than five residues are hydrolyzed (such as succinyl-Leu-Tyr-|-NHMec, and Leu-Tyr-Leu-|-Tyr-Trp, in which cleavage of the -Tyr-|-Leu- and -Tyr-|-Trp bonds also occurs).. Functionally, cleaves peptides in various proteins in a process that requires ATP hydrolysis. Has a chymotrypsin-like activity. Plays a major role in the degradation of misfolded proteins. This chain is ATP-dependent Clp protease proteolytic subunit, found in Buchnera aphidicola subsp. Baizongia pistaciae (strain Bp).